Reading from the N-terminus, the 365-residue chain is Alanine racemase (365 aa).

Lys36 serves as the catalytic Proton acceptor; specific for D-alanine. Lys36 is subject to N6-(pyridoxal phosphate)lysine. A substrate-binding site is contributed by Arg132. Residue Tyr257 is the Proton acceptor; specific for L-alanine of the active site. Met305 contributes to the substrate binding site.

Belongs to the alanine racemase family. It depends on pyridoxal 5'-phosphate as a cofactor.

The catalysed reaction is L-alanine = D-alanine. It participates in amino-acid biosynthesis; D-alanine biosynthesis; D-alanine from L-alanine: step 1/1. Catalyzes the interconversion of L-alanine and D-alanine. May also act on other amino acids. This is Alanine racemase (alr) from Xylella fastidiosa (strain Temecula1 / ATCC 700964).